The sequence spans 461 residues: MSLSVVILAAGKGTRMRSSLPKVLHSVAEKPMVGHVIDSARQLGASNIYVVYGFGGDVLKATLTKDNTGDDLTFVEQVEQLGTGHAVDQASPFLTDDEDVLVLYGDVPLTKVSTLESLLAAKPTDGMALLTVHLANPMGYGRIVRQEISGKQQVVGIIEQKDANEEQLKINEANTGILLANGGDLKRWLSNLSSDNAQGEYYLTDIIAAAHGEGKVVATAHPETEIEVEGANNRVQLATLERAYQARIAEELMIAGASLRDPARIDVRGNLTTGTEVSIDINCIFEGEVSLADNVQIGANCIIKNSTIGANVEIKPNSIIEDTIIEADCSVGPFARLRPGSVMKQDSHVGNFVEMKKTTLGVGSKAGHLSYLGNAEIGTKVNIGAGTITCNYDGVNKSTTEIGDNAFIGSNSSLVAPVIIGNSATVGAGSVISKEVEDNDLALTRAKQRNIAGWQRPVKKS.

Residues 1–234 (MSLSVVILAA…EIEVEGANNR (234 aa)) form a pyrophosphorylase region. UDP-N-acetyl-alpha-D-glucosamine-binding positions include 8–11 (LAAG), Lys22, Gln77, 82–83 (GT), 104–106 (YGD), Gly141, Glu159, Asn174, and Asn232. Asp106 lines the Mg(2+) pocket. Asn232 provides a ligand contact to Mg(2+). Residues 235–255 (VQLATLERAYQARIAEELMIA) form a linker region. Residues 256–461 (GASLRDPARI…AGWQRPVKKS (206 aa)) form an N-acetyltransferase region. The UDP-N-acetyl-alpha-D-glucosamine site is built by Arg338 and Lys356. His368 serves as the catalytic Proton acceptor. Residues Tyr371 and Asn382 each coordinate UDP-N-acetyl-alpha-D-glucosamine. Acetyl-CoA is bound by residues Ala385, 391–392 (NY), Ser410, Ala428, and Arg445.

This sequence in the N-terminal section; belongs to the N-acetylglucosamine-1-phosphate uridyltransferase family. The protein in the C-terminal section; belongs to the transferase hexapeptide repeat family. In terms of assembly, homotrimer. Mg(2+) is required as a cofactor.

It is found in the cytoplasm. It carries out the reaction alpha-D-glucosamine 1-phosphate + acetyl-CoA = N-acetyl-alpha-D-glucosamine 1-phosphate + CoA + H(+). The catalysed reaction is N-acetyl-alpha-D-glucosamine 1-phosphate + UTP + H(+) = UDP-N-acetyl-alpha-D-glucosamine + diphosphate. It participates in nucleotide-sugar biosynthesis; UDP-N-acetyl-alpha-D-glucosamine biosynthesis; N-acetyl-alpha-D-glucosamine 1-phosphate from alpha-D-glucosamine 6-phosphate (route II): step 2/2. The protein operates within nucleotide-sugar biosynthesis; UDP-N-acetyl-alpha-D-glucosamine biosynthesis; UDP-N-acetyl-alpha-D-glucosamine from N-acetyl-alpha-D-glucosamine 1-phosphate: step 1/1. It functions in the pathway bacterial outer membrane biogenesis; LPS lipid A biosynthesis. Catalyzes the last two sequential reactions in the de novo biosynthetic pathway for UDP-N-acetylglucosamine (UDP-GlcNAc). The C-terminal domain catalyzes the transfer of acetyl group from acetyl coenzyme A to glucosamine-1-phosphate (GlcN-1-P) to produce N-acetylglucosamine-1-phosphate (GlcNAc-1-P), which is converted into UDP-GlcNAc by the transfer of uridine 5-monophosphate (from uridine 5-triphosphate), a reaction catalyzed by the N-terminal domain. This is Bifunctional protein GlmU from Colwellia psychrerythraea (strain 34H / ATCC BAA-681) (Vibrio psychroerythus).